Reading from the N-terminus, the 131-residue chain is Holo-[acyl-carrier-protein] synthase (131 aa).

Mg(2+) contacts are provided by D8 and E59.

Belongs to the P-Pant transferase superfamily. AcpS family. Requires Mg(2+) as cofactor.

It is found in the cytoplasm. The catalysed reaction is apo-[ACP] + CoA = holo-[ACP] + adenosine 3',5'-bisphosphate + H(+). In terms of biological role, transfers the 4'-phosphopantetheine moiety from coenzyme A to a Ser of acyl-carrier-protein. This is Holo-[acyl-carrier-protein] synthase from Rickettsia rickettsii (strain Iowa).